Reading from the N-terminus, the 168-residue chain is MAPKKAKRRAAEGSSNVFSMFDQTQIQEFKEAFTVIDQNRDGIIDKDDLRETFAAMGRLNVKNEELDAMIKEASGPINFTVFLTMFGEKLKGADPEDVIMGAFKVLDPDGKGSIKKSFLEELLTTQCDRFTPEEIKNMWAAFPPDVAGNVDYKNICYVITHGEDKEGE.

The residue at position 2 (Ala2) is a N,N,N-trimethylalanine. Position 15 is a phosphoserine (Ser15). 3 EF-hand domains span residues Thr24 to Leu59, Asp94 to Arg129, and Phe130 to Lys165. Ca(2+) is bound by residues Asp37, Asn39, Asp41, and Asp48.

In terms of assembly, myosin is a hexamer of 2 heavy chains and 4 light chains. The N-terminus is blocked. N,N,N-trimethylalanine, found in other myosin light chains would not have been detected in the N-terminal tryptic peptide in PubMed:7358336 because it would remain trimethylated and ninhydrin negative after hydrolysis.

Functionally, myosin regulatory subunit that plays an essential to maintain muscle integrity during early development. Plays a role in muscle contraction. The sequence is that of Myosin regulatory light chain 11 (MYL11) from Gallus gallus (Chicken).